The primary structure comprises 124 residues: MPTINQLVRKGRRDKVAKTKTAALKGSPQRRGVCTRVYTTTPKKPNSALRKVARVRLTSQVEVTAYIPGEGHNLQEHSMVLVRGGRVKDLPGVRYKIIRGSLDTQGVKNRKQARSRYGAKKEKS.

Disordered regions lie at residues 9–32 (RKGR…QRRG) and 105–124 (QGVK…KEKS). Over residues 108-118 (KNRKQARSRYG) the composition is skewed to basic residues.

The protein belongs to the universal ribosomal protein uS12 family. In terms of assembly, part of the 30S ribosomal subunit. Contacts proteins S8 and S17. May interact with IF1 in the 30S initiation complex.

Its function is as follows. With S4 and S5 plays an important role in translational accuracy. Functionally, interacts with and stabilizes bases of the 16S rRNA that are involved in tRNA selection in the A site and with the mRNA backbone. Located at the interface of the 30S and 50S subunits, it traverses the body of the 30S subunit contacting proteins on the other side and probably holding the rRNA structure together. The combined cluster of proteins S8, S12 and S17 appears to hold together the shoulder and platform of the 30S subunit. The protein is Small ribosomal subunit protein uS12 of Nocardia farcinica (strain IFM 10152).